The following is a 955-amino-acid chain: Thrombospondin-4 (955 aa).

Residues Met-1 to Ala-24 form the signal peptide. Residues Gln-25–Gly-192 form the Laminin G-like domain. An EGF-like 1 domain is found at Pro-281–Thr-320. 21 disulfides stabilise this stretch: Cys-285–Cys-296, Cys-290–Cys-305, Cys-308–Cys-319, Cys-325–Cys-336, Cys-330–Cys-345, Cys-348–Cys-372, Cys-378–Cys-392, Cys-386–Cys-401, Cys-404–Cys-416, Cys-422–Cys-435, Cys-429–Cys-445, Cys-447–Cys-458, Cys-474–Cys-479, Cys-484–Cys-504, Cys-520–Cys-540, Cys-543–Cys-563, Cys-579–Cys-599, Cys-602–Cys-622, Cys-640–Cys-660, Cys-680–Cys-700, and Cys-716–Cys-937. The 38-residue stretch at Asp-321–Gln-358 folds into the EGF-like 2; calcium-binding domain. The EGF-like 3; calcium-binding domain occupies Asp-374–Gly-415. The EGF-like 4 domain maps to Pro-418–Gly-459. TSP type-3 repeat units lie at residues Lys-460–Gln-492, Glu-493–Gln-528, Lys-529–Gln-551, Arg-552–Gln-587, Lys-588–Gln-610, Ser-611–Gln-648, Leu-649–Gln-688, and Glu-689–Leu-724. Asn-609 carries N-linked (GlcNAc...) asparagine glycosylation. The disordered stretch occupies residues Gln-610–Asp-678. Residues Thr-637–Leu-649 are compositionally biased toward polar residues. Over residues Gly-657 to Gly-668 the composition is skewed to acidic residues. Positions Arg-728–Pro-942 constitute a TSP C-terminal domain. Asn-938 carries N-linked (GlcNAc...) asparagine glycosylation.

This sequence belongs to the thrombospondin family. Homotrimer; disulfide-linked.

Its subcellular location is the endoplasmic reticulum. It localises to the sarcoplasmic reticulum. The protein localises to the secreted. It is found in the extracellular space. The protein resides in the extracellular matrix. In terms of biological role, adhesive glycoprotein that mediates cell-to-cell and cell-to-matrix interactions and may be involved in various processes including cellular proliferation, migration, adhesion and attachment. May play a role in ER stress response. May participate in the genesis and function of cardiac and skeletal muscle. This chain is Thrombospondin-4 (thbs4), found in Xenopus laevis (African clawed frog).